The primary structure comprises 376 residues: Thymidine kinase (376 aa).

The segment at methionine 1–threonine 38 is disordered. Over residues serine 19 to glutamine 35 the composition is skewed to basic residues. Residue glycine 56 to threonine 63 coordinates ATP. Glutamate 83 functions as the Proton acceptor in the catalytic mechanism. Residues tyrosine 101 and glutamine 125 each contribute to the substrate site. Position 216 (arginine 216) interacts with ATP. Residue arginine 222 participates in substrate binding.

Belongs to the herpesviridae thymidine kinase family. Homodimer.

It catalyses the reaction thymidine + ATP = dTMP + ADP + H(+). Functionally, catalyzes the transfer of the gamma-phospho group of ATP to thymidine to generate dTMP in the salvage pathway of pyrimidine synthesis. The dTMP serves as a substrate for DNA polymerase during viral DNA replication. Allows the virus to be reactivated and to grow in non-proliferative cells lacking a high concentration of phosphorylated nucleic acid precursors. In Homo sapiens (Human), this protein is Thymidine kinase.